A 511-amino-acid polypeptide reads, in one-letter code: Nucleolar protein 58 (511 aa).

Lys-281 participates in a covalent cross-link: Glycyl lysine isopeptide (Lys-Gly) (interchain with G-Cter in ubiquitin). A Nop domain is found at 283-403 (IAPNLTQLVG…VENRLSQLEG (121 aa)). A disordered region spans residues 423-511 (EARAYNADAD…KSKKEKKEKK (89 aa)). The stretch at 435–511 (KAASDSESDS…KSKKEKKEKK (77 aa)) forms a coiled coil. Positions 440–450 (SESDSDDEEEE) are enriched in acidic residues. Over residues 471–511 (KKAKKEKKDKKEKKEKKEKKEKKEKKEKKEKKSKKEKKEKK) the composition is skewed to basic residues.

This sequence belongs to the NOP5/NOP56 family. In terms of assembly, interacts with SIK1/NOP56 and NOP1. Interacts with the trimethylguanosine synthase TGS1. Component of the ribosomal small subunit (SSU) processome composed of at least 40 protein subunits and snoRNA U3.

It is found in the nucleus. Its subcellular location is the nucleolus. In terms of biological role, required for pre-18S rRNA processing. May bind microtubules. This is Nucleolar protein 58 (NOP58) from Saccharomyces cerevisiae (strain ATCC 204508 / S288c) (Baker's yeast).